Reading from the N-terminus, the 590-residue chain is Cytosolic Fe-S cluster assembly factor nar1 (590 aa).

[4Fe-4S] cluster is bound by residues Cys-20, Cys-62, Cys-65, Cys-68, Cys-214, Cys-269, Cys-456, and Cys-460.

The protein belongs to the NARF family.

Its function is as follows. Component of the cytosolic Fe/S protein assembly machinery. Required for maturation of extramitochondrial Fe/S proteins. May play a role in the transfer of pre-assembled Fe/S clusters to target apoproteins. The chain is Cytosolic Fe-S cluster assembly factor nar1 (nar1) from Talaromyces marneffei (strain ATCC 18224 / CBS 334.59 / QM 7333) (Penicillium marneffei).